We begin with the raw amino-acid sequence, 547 residues long: Chaperonin GroEL (547 aa).

ATP contacts are provided by residues 30 to 33 (TLGP), lysine 51, 87 to 91 (DGTTT), glycine 415, 479 to 481 (NAA), and aspartate 495.

This sequence belongs to the chaperonin (HSP60) family. In terms of assembly, forms a cylinder of 14 subunits composed of two heptameric rings stacked back-to-back. Interacts with the co-chaperonin GroES.

Its subcellular location is the cytoplasm. It catalyses the reaction ATP + H2O + a folded polypeptide = ADP + phosphate + an unfolded polypeptide.. Together with its co-chaperonin GroES, plays an essential role in assisting protein folding. The GroEL-GroES system forms a nano-cage that allows encapsulation of the non-native substrate proteins and provides a physical environment optimized to promote and accelerate protein folding. The sequence is that of Chaperonin GroEL from Pseudomonas syringae pv. syringae (strain B728a).